A 232-amino-acid polypeptide reads, in one-letter code: Charged multivesicular body protein 4c (232 aa).

2 disordered regions span residues 1-23 (MSKL…PSAQ) and 177-232 (NKKM…AWAT). Positions 1–153 (MSKLGKFFKG…EISEAFSQRV (153 aa)) are intramolecular interaction with C-terminus. Coiled coils occupy residues 21–45 (SAQE…YLEN) and 125–185 (LNKI…SLEL). The tract at residues 154–232 (QFADGFDEAE…DFKQLAAWAT (79 aa)) is intramolecular interaction with N-terminus. Position 210 is a phosphoserine; by AURKB (serine 210).

This sequence belongs to the SNF7 family. In terms of assembly, probable core component of the endosomal sorting required for transport complex III (ESCRT-III). ESCRT-III components are thought to multimerize to form a flat lattice on the perimeter membrane of the endosome. Several assembly forms of ESCRT-III may exist that interact and act sequentially. Self-associates. Interacts with CHMP2A. Interacts with CHMP4A. Interacts with CHMP4B. Interacts with CHMP6. Interacts with VPS4A. Interacts with PDCD6IP; the interaction is direct. Phosphorylated at Ser-210 by AURKB during cytokinesis: together with ZFYVE19/ANCHR, phosphorylated CHMP4C retains abscission-competent VPS4 (VPS4A and/or VPS4B) at the midbody ring until abscission checkpoint signaling is terminated at late cytokinesis.

The protein localises to the cytoplasm. Its subcellular location is the cytosol. It is found in the late endosome membrane. The protein resides in the midbody. It localises to the midbody ring. Probable core component of the endosomal sorting required for transport complex III (ESCRT-III) which is involved in multivesicular bodies (MVBs) formation and sorting of endosomal cargo proteins into MVBs. MVBs contain intraluminal vesicles (ILVs) that are generated by invagination and scission from the limiting membrane of the endosome and mostly are delivered to lysosomes enabling degradation of membrane proteins, such as stimulated growth factor receptors, lysosomal enzymes and lipids. The MVB pathway appears to require the sequential function of ESCRT-O, -I,-II and -III complexes. ESCRT-III proteins mostly dissociate from the invaginating membrane before the ILV is released. The ESCRT machinery also functions in topologically equivalent membrane fission events, such as the terminal stages of cytokinesis. Key component of the cytokinesis checkpoint, a process required to delay abscission to prevent both premature resolution of intercellular chromosome bridges and accumulation of DNA damage: upon phosphorylation by AURKB, together with ZFYVE19/ANCHR, retains abscission-competent VPS4 (VPS4A and/or VPS4B) at the midbody ring until abscission checkpoint signaling is terminated at late cytokinesis. Deactivation of AURKB results in dephosphorylation of CHMP4C followed by its dissociation from ANCHR and VPS4 and subsequent abscission. ESCRT-III proteins are believed to mediate the necessary vesicle extrusion and/or membrane fission activities, possibly in conjunction with the AAA ATPase VPS4. CHMP4A/B/C are required for the exosomal release of SDCBP, CD63 and syndecan. This is Charged multivesicular body protein 4c (Chmp4c) from Mus musculus (Mouse).